We begin with the raw amino-acid sequence, 307 residues long: MLQQRSLKTLTRAVGVGLHSGQRVELTLRPAQPDTGIVFRRVDLPQPVDIPVRAEAVTDTRLASTIAQGSAKVHTVEHLMSACAGLGIDNLHVDITAEEVPILDGSSASFVFLLQSAGIVRQNAPKRFIRVTRPVQVREGEGADAKWAQLAPYHGYKLSFEIGFDHPAVDATGQRVEFDLGRGNYRRDIARARTFGFTRDVELMRANGLALGGGLDNAIVMDDYKVLNSDGLRYDDEFVKHKILDAMGDLHLLGKPLLAAYSAFRSGHALNNRLLRALLAQRDAWEVVTFEDERQAPGGFAQPAQAW.

Residues H78, H241, and D245 each coordinate Zn(2+). H268 (proton donor) is an active-site residue.

Belongs to the LpxC family. Requires Zn(2+) as cofactor.

The catalysed reaction is a UDP-3-O-[(3R)-3-hydroxyacyl]-N-acetyl-alpha-D-glucosamine + H2O = a UDP-3-O-[(3R)-3-hydroxyacyl]-alpha-D-glucosamine + acetate. It functions in the pathway glycolipid biosynthesis; lipid IV(A) biosynthesis; lipid IV(A) from (3R)-3-hydroxytetradecanoyl-[acyl-carrier-protein] and UDP-N-acetyl-alpha-D-glucosamine: step 2/6. In terms of biological role, catalyzes the hydrolysis of UDP-3-O-myristoyl-N-acetylglucosamine to form UDP-3-O-myristoylglucosamine and acetate, the committed step in lipid A biosynthesis. The protein is UDP-3-O-acyl-N-acetylglucosamine deacetylase of Verminephrobacter eiseniae (strain EF01-2).